Reading from the N-terminus, the 284-residue chain is MSMLPSFGFTQEQVACVCEVLQQGGNLERLGRFLWSLPACDHLHKNESVLKAKAVVAFHRGNFRELYKILESHQFSPHNHPKLQQLWLKAHYVEAEKLRGRPLGAVGKYRVRRKFPLPRTIWDGEETSYCFKEKSRGVLREWYAHNPYPSPREKRELAEATGLTTTQVSNWFKNRRQRDRAAEAKERENTENNNSSSNKQNQLSPLEGGKPLMSSSEEEFSPPQSPDQNSVLLLQSNMGHARSSNYSLPGLTASQPSHGLQAHQHQLQDSLLGPLTSSLVDLGS.

The segment at residues 124–183 is a DNA-binding region (homeobox); that stretch reads GEETSYCFKEKSRGVLREWYAHNPYPSPREKRELAEATGLTTTQVSNWFKNRRQRDRAAE. Positions 168–284 are disordered; sequence VSNWFKNRRQ…LTSSLVDLGS (117 aa). Residues 179-190 show a composition bias toward basic and acidic residues; that stretch reads DRAAEAKERENT. Over residues 227-284 the composition is skewed to polar residues; it reads DQNSVLLLQSNMGHARSSNYSLPGLTASQPSHGLQAHQHQLQDSLLGPLTSSLVDLGS.

The protein belongs to the SIX/Sine oculis homeobox family. Interacts with DACH1. Interacts with EYA1. Interacts with EYA2. Interacts with CDH1. Interacts with TBX18. Interacts with CEBPA. Interacts with CEBPB. Interacts with EBF2. In terms of processing, phosphorylated during interphase; becomes hyperphosphorylated during mitosis. Hyperphosphorylation impairs binding to promoter elements. Ubiquitinated by the anaphase promoting complex (APC), leading to its proteasomal degradation. Expressed in phalangeal tendons and in skeletal muscle and in head and body mesenchyme.

Its subcellular location is the nucleus. It is found in the cytoplasm. In terms of biological role, transcription factor that is involved in the regulation of cell proliferation, apoptosis and embryonic development. Plays an important role in the development of several organs, including kidney, muscle and inner ear. Depending on context, functions as a transcriptional repressor or activator. Lacks an activation domain, and requires interaction with EYA family members for transcription activation. Mediates nuclear translocation of EYA1 and EYA2. Binds the 5'-TCA[AG][AG]TTNC-3' motif present in the MEF3 element in the MYOG promoter and CIDEA enhancer. Regulates the expression of numerous genes, including MYC, CCNA1, CCND1 and EZR. Acts as an activator of the IGFBP5 promoter, probably coactivated by EYA2. Repression of precursor cell proliferation in myoblasts is switched to activation through recruitment of EYA3 to the SIX1-DACH1 complex. During myogenesis, seems to act together with EYA2 and DACH2. Regulates the expression of CCNA1. Promotes brown adipocyte differentiation. The protein is Homeobox protein SIX1 (Six1) of Mus musculus (Mouse).